The chain runs to 269 residues: Formamidopyrimidine-DNA glycosylase (269 aa).

Pro-2 functions as the Schiff-base intermediate with DNA in the catalytic mechanism. Residue Glu-3 is the Proton donor of the active site. Lys-57 serves as the catalytic Proton donor; for beta-elimination activity. Residues His-90, Arg-109, and Arg-150 each contribute to the DNA site. An FPG-type zinc finger spans residues 235–269; that stretch reads QVYGRKGEPCRVCGTPVVATKHAQRATFYCRHCQK. Arg-259 acts as the Proton donor; for delta-elimination activity in catalysis.

It belongs to the FPG family. In terms of assembly, monomer. It depends on Zn(2+) as a cofactor.

It carries out the reaction Hydrolysis of DNA containing ring-opened 7-methylguanine residues, releasing 2,6-diamino-4-hydroxy-5-(N-methyl)formamidopyrimidine.. It catalyses the reaction 2'-deoxyribonucleotide-(2'-deoxyribose 5'-phosphate)-2'-deoxyribonucleotide-DNA = a 3'-end 2'-deoxyribonucleotide-(2,3-dehydro-2,3-deoxyribose 5'-phosphate)-DNA + a 5'-end 5'-phospho-2'-deoxyribonucleoside-DNA + H(+). Involved in base excision repair of DNA damaged by oxidation or by mutagenic agents. Acts as a DNA glycosylase that recognizes and removes damaged bases. Has a preference for oxidized purines, such as 7,8-dihydro-8-oxoguanine (8-oxoG). Has AP (apurinic/apyrimidinic) lyase activity and introduces nicks in the DNA strand. Cleaves the DNA backbone by beta-delta elimination to generate a single-strand break at the site of the removed base with both 3'- and 5'-phosphates. The protein is Formamidopyrimidine-DNA glycosylase of Salmonella arizonae (strain ATCC BAA-731 / CDC346-86 / RSK2980).